Consider the following 173-residue polypeptide: Crossover junction endodeoxyribonuclease RuvC (173 aa).

Residues Asp8, Glu67, and Asp139 contribute to the active site. Residues Asp8, Glu67, and Asp139 each contribute to the Mg(2+) site.

It belongs to the RuvC family. In terms of assembly, homodimer which binds Holliday junction (HJ) DNA. The HJ becomes 2-fold symmetrical on binding to RuvC with unstacked arms; it has a different conformation from HJ DNA in complex with RuvA. In the full resolvosome a probable DNA-RuvA(4)-RuvB(12)-RuvC(2) complex forms which resolves the HJ. Mg(2+) serves as cofactor.

The protein localises to the cytoplasm. The catalysed reaction is Endonucleolytic cleavage at a junction such as a reciprocal single-stranded crossover between two homologous DNA duplexes (Holliday junction).. The RuvA-RuvB-RuvC complex processes Holliday junction (HJ) DNA during genetic recombination and DNA repair. Endonuclease that resolves HJ intermediates. Cleaves cruciform DNA by making single-stranded nicks across the HJ at symmetrical positions within the homologous arms, yielding a 5'-phosphate and a 3'-hydroxyl group; requires a central core of homology in the junction. The consensus cleavage sequence is 5'-(A/T)TT(C/G)-3'. Cleavage occurs on the 3'-side of the TT dinucleotide at the point of strand exchange. HJ branch migration catalyzed by RuvA-RuvB allows RuvC to scan DNA until it finds its consensus sequence, where it cleaves and resolves the cruciform DNA. In Citrobacter koseri (strain ATCC BAA-895 / CDC 4225-83 / SGSC4696), this protein is Crossover junction endodeoxyribonuclease RuvC.